A 263-amino-acid polypeptide reads, in one-letter code: uncharacterized protein (263 aa).

An N-terminal signal peptide occupies residues 1 to 22 (MEYLKRLALLISVIILTIFIMG). The N-palmitoyl cysteine moiety is linked to residue cysteine 23. Cysteine 23 carries S-diacylglycerol cysteine lipidation.

Belongs to the staphylococcal tandem lipoprotein family.

It is found in the cell membrane. This is an uncharacterized protein from Staphylococcus aureus (strain USA300).